We begin with the raw amino-acid sequence, 342 residues long: tRNA N6-adenosine threonylcarbamoyltransferase (342 aa).

Fe cation contacts are provided by His-115 and His-119. Substrate contacts are provided by residues 137–141 (IVSGG), Asp-170, Gly-183, Asp-187, and Asn-276. Asp-304 lines the Fe cation pocket.

Belongs to the KAE1 / TsaD family. Fe(2+) serves as cofactor.

Its subcellular location is the cytoplasm. The enzyme catalyses L-threonylcarbamoyladenylate + adenosine(37) in tRNA = N(6)-L-threonylcarbamoyladenosine(37) in tRNA + AMP + H(+). Required for the formation of a threonylcarbamoyl group on adenosine at position 37 (t(6)A37) in tRNAs that read codons beginning with adenine. Is involved in the transfer of the threonylcarbamoyl moiety of threonylcarbamoyl-AMP (TC-AMP) to the N6 group of A37, together with TsaE and TsaB. TsaD likely plays a direct catalytic role in this reaction. The polypeptide is tRNA N6-adenosine threonylcarbamoyltransferase (Staphylococcus saprophyticus subsp. saprophyticus (strain ATCC 15305 / DSM 20229 / NCIMB 8711 / NCTC 7292 / S-41)).